The chain runs to 425 residues: Histidine--tRNA ligase (425 aa).

This sequence belongs to the class-II aminoacyl-tRNA synthetase family. In terms of assembly, homodimer.

It localises to the cytoplasm. It carries out the reaction tRNA(His) + L-histidine + ATP = L-histidyl-tRNA(His) + AMP + diphosphate + H(+). The polypeptide is Histidine--tRNA ligase (Histophilus somni (strain 2336) (Haemophilus somnus)).